The chain runs to 72 residues: MARDDVIEVDGKVIEALPNATFKVELDNKHVVLCRISGKMRMHYIRIALGDRVKLELTPYSLDKGRITFRYK.

Positions 1–72 constitute an S1-like domain; sequence MARDDVIEVD…DKGRITFRYK (72 aa).

The protein belongs to the IF-1 family. Component of the 30S ribosomal translation pre-initiation complex which assembles on the 30S ribosome in the order IF-2 and IF-3, IF-1 and N-formylmethionyl-tRNA(fMet); mRNA recruitment can occur at any time during PIC assembly.

Its subcellular location is the cytoplasm. One of the essential components for the initiation of protein synthesis. Stabilizes the binding of IF-2 and IF-3 on the 30S subunit to which N-formylmethionyl-tRNA(fMet) subsequently binds. Helps modulate mRNA selection, yielding the 30S pre-initiation complex (PIC). Upon addition of the 50S ribosomal subunit IF-1, IF-2 and IF-3 are released leaving the mature 70S translation initiation complex. This chain is Translation initiation factor IF-1, found in Helicobacter pylori (strain HPAG1).